An 892-amino-acid polypeptide reads, in one-letter code: Alanine--tRNA ligase (892 aa).

Positions 596, 600, 700, and 704 each coordinate Zn(2+).

This sequence belongs to the class-II aminoacyl-tRNA synthetase family. Zn(2+) is required as a cofactor.

The protein resides in the cytoplasm. It carries out the reaction tRNA(Ala) + L-alanine + ATP = L-alanyl-tRNA(Ala) + AMP + diphosphate. Catalyzes the attachment of alanine to tRNA(Ala) in a two-step reaction: alanine is first activated by ATP to form Ala-AMP and then transferred to the acceptor end of tRNA(Ala). Also edits incorrectly charged Ser-tRNA(Ala) and Gly-tRNA(Ala) via its editing domain. This is Alanine--tRNA ligase from Methanococcus maripaludis (strain DSM 14266 / JCM 13030 / NBRC 101832 / S2 / LL).